Consider the following 511-residue polypeptide: Maturase K (511 aa).

This sequence belongs to the intron maturase 2 family. MatK subfamily.

Its subcellular location is the plastid. In terms of biological role, usually encoded in the trnK tRNA gene intron. Probably assists in splicing its own and other chloroplast group II introns. The protein is Maturase K of Lathraea clandestina (Purple toothwort).